The chain runs to 721 residues: Probable acyl-activating enzyme 17, peroxisomal (721 aa).

The Microbody targeting signal signature appears at 719 to 721 (SKL).

It belongs to the ATP-dependent AMP-binding enzyme family. As to expression, expressed in leaves, stems and developing seeds.

It localises to the peroxisome. May act as an acid--thiol ligase that activates carboxylic acids by forming acyl-CoAs. The chain is Probable acyl-activating enzyme 17, peroxisomal (AAE17) from Arabidopsis thaliana (Mouse-ear cress).